The sequence spans 360 residues: MAKLPVEKMRELERRFGEIEARMSAGPSADVYVKLASEYSELQPVVSKIRAYEKATAELADIAAMLADRATDKDMRDLAEMEKPEVEEKIEALEQEIQILLLPKDAADEKSAILEIRAGTGGSEAALFAGDLFRMYERYAASKGWRVEVLSASEGEAGGYKEIIATVSGRGVFSRLKFESGVHRVQRVPETEASGRIHTSAATVAVLPEAEEIDIDVRPEDIRVDTMRSSGAGGQHVNTTDSAVRITHIPTGIVVTSSEKSQHQNRAKAMQVLRSRLYDMERQRADSERSADRRSQVGSGDRSERIRTYNFPQGRLTDHRINLTLYKLDRMMEGEIDDVVDALLADYQASQLALLGERQN.

An N5-methylglutamine modification is found at Gln235. Positions 281-307 (ERQRADSERSADRRSQVGSGDRSERIR) are enriched in basic and acidic residues. Positions 281-311 (ERQRADSERSADRRSQVGSGDRSERIRTYNF) are disordered.

Belongs to the prokaryotic/mitochondrial release factor family. Methylated by PrmC. Methylation increases the termination efficiency of RF1.

The protein resides in the cytoplasm. Its function is as follows. Peptide chain release factor 1 directs the termination of translation in response to the peptide chain termination codons UAG and UAA. This Rhizobium meliloti (strain 1021) (Ensifer meliloti) protein is Peptide chain release factor 1.